The following is a 337-amino-acid chain: UDP-glucose 4-epimerase (337 aa).

NAD(+) is bound by residues 11–12 (YI), 31–36 (DNLSNA), 58–59 (DL), 80–84 (FAGLK), Asn-99, Ser-124, Tyr-149, Lys-153, and Phe-178. Residues Ser-124 and Tyr-149 each coordinate substrate. Tyr-149 serves as the catalytic Proton acceptor. Residues Asn-179, 199 to 200 (NL), 216 to 218 (GIF), Arg-231, and 292 to 295 (RDGD) contribute to the substrate site.

Belongs to the NAD(P)-dependent epimerase/dehydratase family. Homodimer. The cofactor is NAD(+).

The enzyme catalyses UDP-alpha-D-glucose = UDP-alpha-D-galactose. Its pathway is carbohydrate metabolism; galactose metabolism. Involved in the metabolism of galactose. Catalyzes the conversion of UDP-galactose (UDP-Gal) to UDP-glucose (UDP-Glc) through a mechanism involving the transient reduction of NAD. In Erwinia amylovora (Fire blight bacteria), this protein is UDP-glucose 4-epimerase (galE).